A 68-amino-acid chain; its full sequence is Purkinje cell protein 4-like protein 1 (68 aa).

Polar residues predominate over residues 1–16 (MSELNTKTPPAANQAS). Positions 1-42 (MSELNTKTPPAANQASDPEEKGKPGSIKKAEEEEEIDIDLTA) are disordered. Residue Thr-8 is modified to Phosphothreonine. A compositionally biased stretch (basic and acidic residues) spans 18–31 (PEEKGKPGSIKKAE). Residues 45–68 (TEKAALAIQGKFRRFQKRKKDSSS) form the IQ domain.

This sequence belongs to the PCP4 family. As to expression, expressed in laminar and nuclear structures of the CNS.

This is Purkinje cell protein 4-like protein 1 (Pcp4l1) from Mus musculus (Mouse).